We begin with the raw amino-acid sequence, 697 residues long: Lebercilin (697 aa).

Residues 1 to 90 (MGERAGSPGT…VGFRSQSLNR (90 aa)) form a disordered region. S7 and S45 each carry phosphoserine. Low complexity predominate over residues 32-45 (SSGRSSLVSSSPAS). 2 coiled-coil regions span residues 103–297 (RILS…IKNI) and 389–485 (EEKF…RNLK). Disordered stretches follow at residues 412–432 (WERE…EREE), 522–548 (HHLQ…PASP), and 606–697 (EQLF…VALR). Over residues 416–432 (ELDKKQKEKASLLEREE) the composition is skewed to basic and acidic residues. The span at 527–547 (ISFSTPKGEGQNSGNVRSPAS) shows a compositional bias: polar residues. Positions 612-626 (SGSSTISSKSSDPNS) are enriched in low complexity. The span at 686–697 (SVEDEIEEVALR) shows a compositional bias: acidic residues.

This sequence belongs to the LCA5 family. In terms of assembly, interacts with NINL. Interacts with OFD1. Interacts with FAM161A. Interacts with components of the IFT complex B. Widely expressed.

The protein localises to the cytoplasm. The protein resides in the cytoskeleton. It is found in the cilium axoneme. Its subcellular location is the cilium basal body. It localises to the microtubule organizing center. The protein localises to the centrosome. The protein resides in the cell projection. It is found in the cilium. Functionally, involved in intraflagellar protein (IFT) transport in photoreceptor cilia. The protein is Lebercilin (LCA5) of Homo sapiens (Human).